Reading from the N-terminus, the 201-residue chain is Small ribosomal subunit protein uS5 (201 aa).

Residues M1–D28 are disordered. Residues L31 to V94 enclose the S5 DRBM domain. Residues S173 to A201 are disordered.

It belongs to the universal ribosomal protein uS5 family. Part of the 30S ribosomal subunit. Contacts proteins S4 and S8.

With S4 and S12 plays an important role in translational accuracy. Its function is as follows. Located at the back of the 30S subunit body where it stabilizes the conformation of the head with respect to the body. In Maricaulis maris (strain MCS10) (Caulobacter maris), this protein is Small ribosomal subunit protein uS5.